The following is a 606-amino-acid chain: Polyphenol oxidase A1, chloroplastic (606 aa).

The transit peptide at 1-92 directs the protein to the chloroplast; it reads MTSISALSFI…TLATNPSALA (92 aa). The interval 32–63 is disordered; that stretch reads KQHQSSKLRKPKRQVTCSSNNNQNNPKEEQEL. Residues 35 to 44 show a composition bias toward basic residues; the sequence is QSSKLRKPKR. 2 cysteine pairs are disulfide-bonded: Cys-103/Cys-121 and Cys-120/Cys-182. Cu cation-binding residues include His-181, His-202, His-211, His-333, His-337, and His-367. A cross-link (2'-(S-cysteinyl)-histidine (Cys-His)) is located at residues 185–202; the sequence is CDGAYSQIGFPDLKLQVH.

It belongs to the tyrosinase family. Cu(2+) is required as a cofactor.

The protein resides in the plastid. Its subcellular location is the chloroplast thylakoid lumen. It catalyses the reaction 2 catechol + O2 = 2 1,2-benzoquinone + 2 H2O. Functionally, catalyzes the oxidation of mono- and o-diphenols to o-diquinones. This chain is Polyphenol oxidase A1, chloroplastic, found in Vicia faba (Broad bean).